The primary structure comprises 100 residues: MTVKTGIAIGLNKGKKVTSMTPAPKISYKKGAASNRTKFVRSLVREIAGLSPYERRLIDLIRNSGEKRARKVAKKRLGSFTRAKAKVEEMNNIIAASRRH.

The residue at position 2 (T2) is an N-acetylthreonine.

Belongs to the eukaryotic ribosomal protein eL36 family. As to quaternary structure, component of the large ribosomal subunit (LSU). Mature yeast ribosomes consist of a small (40S) and a large (60S) subunit. The 40S small subunit contains 1 molecule of ribosomal RNA (18S rRNA) and 33 different proteins (encoded by 57 genes). The large 60S subunit contains 3 rRNA molecules (25S, 5.8S and 5S rRNA) and 46 different proteins (encoded by 81 genes). Post-translationally, N-terminally acetylated by acetyltransferase NatA.

The protein localises to the cytoplasm. In terms of biological role, component of the ribosome, a large ribonucleoprotein complex responsible for the synthesis of proteins in the cell. The small ribosomal subunit (SSU) binds messenger RNAs (mRNAs) and translates the encoded message by selecting cognate aminoacyl-transfer RNA (tRNA) molecules. The large subunit (LSU) contains the ribosomal catalytic site termed the peptidyl transferase center (PTC), which catalyzes the formation of peptide bonds, thereby polymerizing the amino acids delivered by tRNAs into a polypeptide chain. The nascent polypeptides leave the ribosome through a tunnel in the LSU and interact with protein factors that function in enzymatic processing, targeting, and the membrane insertion of nascent chains at the exit of the ribosomal tunnel. In Saccharomyces cerevisiae (strain ATCC 204508 / S288c) (Baker's yeast), this protein is Large ribosomal subunit protein eL36A.